The chain runs to 454 residues: Cobyrinate a,c-diamide synthase (454 aa).

One can recognise a GATase cobBQ-type domain in the interval 244–440 (RLGIAKDKAF…LHVHFYQNPK (197 aa)). The active-site Nucleophile is C326.

This sequence belongs to the CobB/CbiA family. Requires Mg(2+) as cofactor.

The catalysed reaction is cob(II)yrinate + 2 L-glutamine + 2 ATP + 2 H2O = cob(II)yrinate a,c diamide + 2 L-glutamate + 2 ADP + 2 phosphate + 2 H(+). It participates in cofactor biosynthesis; adenosylcobalamin biosynthesis; cob(II)yrinate a,c-diamide from sirohydrochlorin (anaerobic route): step 10/10. Functionally, catalyzes the ATP-dependent amidation of the two carboxylate groups at positions a and c of cobyrinate, using either L-glutamine or ammonia as the nitrogen source. This Limosilactobacillus reuteri subsp. reuteri (strain JCM 1112) (Lactobacillus reuteri) protein is Cobyrinate a,c-diamide synthase.